Consider the following 907-residue polypeptide: Glutamate receptor 1 (907 aa).

Residues 1-18 (MPYIFAFFCTGFLGAVVG) form the signal peptide. Over 19-536 (ANFPNNIQIG…GVFSFLDPLA (518 aa)) the chain is Extracellular. 6 N-linked (GlcNAc...) asparagine glycosylation sites follow: N63, N249, N257, N363, N401, and N406. C75 and C323 are disulfide-bonded. L-glutamate is bound by residues P492, T494, and R499. The chain crosses the membrane as a helical span at residues 537–557 (YEIWMCIVFAYIGVSVVLFLV). Topologically, residues 558-584 (SRFSPYEWHSEEFEEGRDQTTSDQSNE) are cytoplasmic. Positions 585–600 (FGIFNSLWFSLGAFMQ) form an intramembrane region, helical; Pore-forming. The stretch at 601–603 (QGC) is an intramembrane region. A lipid anchor (S-palmitoyl cysteine) is attached at C603. Over 604 to 609 (DISPRS) the chain is Cytoplasmic. A helical transmembrane segment spans residues 610-630 (LSGRIVGGVWWFFTLIIISSY). The Extracellular segment spans residues 631 to 805 (TANLAAFLTV…DKTSALSLSN (175 aa)). The residue at position 645 (S645) is a Phosphoserine. L-glutamate-binding residues include S668 and T669. Position 710 is a phosphoserine (S710). Residue E719 participates in L-glutamate binding. Residues C732 and C787 are joined by a disulfide bond. Residues 806-826 (VAGVFYILIGGLGLAMLVALI) traverse the membrane as a helical segment. The Cytoplasmic portion of the chain corresponds to 827 to 907 (EFCYKSRSES…SGMPLGATGL (81 aa)). A lipid anchor (S-palmitoyl cysteine) is attached at C829. Phosphoserine occurs at positions 849 and 863. The segment at 857–881 (STLPRNSGAGASGGSGSGENGRVVS) is disordered. The span at 866–875 (GASGGSGSGE) shows a compositional bias: gly residues. The PDZ-binding signature appears at 904–907 (ATGL).

The protein belongs to the glutamate-gated ion channel (TC 1.A.10.1) family. GRIA1 subfamily. In terms of assembly, homotetramer or heterotetramer of pore-forming glutamate receptor subunits. Heteromeric assembly can be the result of both receptor subtype and flip or flop form and according the composition, one partner can be dominant with respect to the fast desensitizing current component, whereas the other can determine the steady-state component. Tetramers may be formed by the dimerization of dimers. Found in a complex with GRIA2, GRIA3, GRIA4, CNIH2, CNIH3, CACNG2, CACNG3, CACNG4, CACNG5, CACNG7 and CACNG8. Interacts with HIP1 and RASGRF2. Interacts with SYNDIG1 and GRIA2. Interacts with DLG1 (via C-terminus). Interacts with LRFN1. Interacts with PRKG2. Interacts with CNIH2 and CACNG2. Interacts with CACNG5; this interaction modulates the gating. Interacts (via C-terminus) with PDLIM4 (via LIM domain); this interaction as well as the interaction of PDLIM4 with alpha-actinin is required for their colocalization in early endosomes. Interacts with SNX27 (via PDZ domain); the interaction is required for recycling to the plasma membrane when endocytosed and prevent degradation in lysosomes. Interacts (via PDZ-binding motif) with SHANK3 (via PDZ domain). Interacts with CACNG3; associates GRIA1 with the adapter protein complex 4 (AP-4) to target GRIA1 to the somatodendritic compartment of neurons. Interacts with CACNG2; this interaction mediates traffick to the plasma membrane and modulation of desensitization. Interacts with CNIH2 and CNIH3; this interaction promotes expression at the plasma membrane and extensively modulates their gating properties by slowing deactivation and desensitization kinetics. Found in a complex with GRIA2, GRIA3, GRIA4, DLG4, CACNG8 and CNIH2. Phosphorylated at Ser-645. Phosphorylated at Ser-710 by PKC. Phosphorylated at Ser-849 by PKC, PKA and CAMK2. Phosphorylated at Ser-863 by PKC, PKA and PRKG2. Phosphorylation of Ser-863 is reduced by induction of long-term depression and increased by induction of long-term potentiation. Post-translationally, palmitoylated. Depalmitoylated by CPT1C and upon L-glutamate stimulation. ZDHHC3/GODZ specifically palmitoylates Cys-603, which leads to Golgi retention and decreased cell surface expression. In contrast, Cys-829 palmitoylation does not affect cell surface expression but regulates stimulation-dependent endocytosis. In terms of tissue distribution, expressed in the outer plexiform layer of the retina of the eye (at protein level). Expressed in the forebrain and hippocampus (at protein level).

The protein resides in the cell membrane. The protein localises to the endoplasmic reticulum membrane. It is found in the postsynaptic cell membrane. It localises to the postsynaptic density membrane. Its subcellular location is the cell projection. The protein resides in the dendrite. The protein localises to the dendritic spine. It is found in the early endosome membrane. It localises to the recycling endosome membrane. Its subcellular location is the presynapse. The protein resides in the synapse. It carries out the reaction Ca(2+)(in) = Ca(2+)(out). It catalyses the reaction Na(+)(in) = Na(+)(out). The enzyme catalyses Mg(2+)(in) = Mg(2+)(out). The catalysed reaction is Li(+)(in) = Li(+)(out). It carries out the reaction K(+)(in) = K(+)(out). It catalyses the reaction Sr(2+)(in) = Sr(2+)(out). In terms of biological role, ionotropic glutamate receptor that functions as a ligand-gated cation channel, gated by L-glutamate and glutamatergic agonists such as alpha-amino-3-hydroxy-5-methyl-4-isoxazolepropionic acid (AMPA), quisqualic acid, and kainic acid. L-glutamate acts as an excitatory neurotransmitter at many synapses in the central nervous system. Binding of the excitatory neurotransmitter L-glutamate induces a conformation change, leading to the opening of the cation channel, and thereby converts the chemical signal to an electrical impulse upon entry of monovalent and divalent cations such as sodium and calcium. The receptor then desensitizes rapidly and enters in a transient inactive state, characterized by the presence of bound agonist. In the presence of CACNG2 or CACNG4 or CACNG7 or CACNG8, shows resensitization which is characterized by a delayed accumulation of current flux upon continued application of L-glutamate. Calcium (Ca(2+)) permeability depends on subunits composition and, heteromeric channels containing edited GRIA2 subunit are calcium-impermeable. Also permeable to other divalents cations such as strontium(2+) and magnesium(2+) and monovalent cations such as potassium(1+) and lithium(1+). The chain is Glutamate receptor 1 from Mus musculus (Mouse).